The sequence spans 594 residues: DNA ligase (594 aa).

NAD(+)-binding positions include 32–36 (DEEYD), 81–82 (SL), and Glu-118. Residue Lys-120 is the N6-AMP-lysine intermediate of the active site. Residues Arg-141, Glu-181, Lys-299, and Lys-323 each coordinate NAD(+). Zn(2+)-binding residues include Cys-417, Cys-420, Cys-436, and Cys-442.

This sequence belongs to the NAD-dependent DNA ligase family. LigA subfamily. The cofactor is Mg(2+). It depends on Mn(2+) as a cofactor.

The enzyme catalyses NAD(+) + (deoxyribonucleotide)n-3'-hydroxyl + 5'-phospho-(deoxyribonucleotide)m = (deoxyribonucleotide)n+m + AMP + beta-nicotinamide D-nucleotide.. Functionally, DNA ligase that catalyzes the formation of phosphodiester linkages between 5'-phosphoryl and 3'-hydroxyl groups in double-stranded DNA using NAD as a coenzyme and as the energy source for the reaction. It is essential for DNA replication and repair of damaged DNA. In Blochmanniella floridana, this protein is DNA ligase.